The chain runs to 717 residues: Serine/threonine-protein kinase STE11 (717 aa).

Residues 20–84 (NDLPFVQLFL…LRKSKSFQRD (65 aa)) form the SAM domain. S323 carries the post-translational modification Phosphoserine. Positions 415-712 (WLKGACIGSG…ALELLQHPWL (298 aa)) constitute a Protein kinase domain. ATP is bound by residues 421-429 (IGSGSFGSV) and K444. Residues 452–466 (NIGVPTDNNKQANSD) are compositionally biased toward polar residues. Residues 452–481 (NIGVPTDNNKQANSDENNEQEEQQEKIEDV) are disordered. S465 carries the post-translational modification Phosphoserine. The Proton acceptor role is filled by D579.

Belongs to the protein kinase superfamily. STE Ser/Thr protein kinase family. MAP kinase kinase kinase subfamily. As to quaternary structure, homodimer. Interacts (via SAM domain) with STE50 (via SAM domain). Interacts with PBS2 and SHO1.

It carries out the reaction L-seryl-[protein] + ATP = O-phospho-L-seryl-[protein] + ADP + H(+). The enzyme catalyses L-threonyl-[protein] + ATP = O-phospho-L-threonyl-[protein] + ADP + H(+). Its function is as follows. Serine/threonine protein kinase required for cell-type-specific transcription and signal transduction in yeast. It is thought that it phosphorylates the STE7 protein kinase which itself, phosphorylates the FUS3 and or KSS1 kinases. The sequence is that of Serine/threonine-protein kinase STE11 (STE11) from Saccharomyces cerevisiae (strain ATCC 204508 / S288c) (Baker's yeast).